The chain runs to 432 residues: Probable D-serine dehydratase (432 aa).

Lys112 bears the N6-(pyridoxal phosphate)lysine mark.

The protein belongs to the serine/threonine dehydratase family. DsdA subfamily. Pyridoxal 5'-phosphate is required as a cofactor.

It carries out the reaction D-serine = pyruvate + NH4(+). The sequence is that of Probable D-serine dehydratase from Pediococcus pentosaceus (strain ATCC 25745 / CCUG 21536 / LMG 10740 / 183-1w).